Here is a 144-residue protein sequence, read N- to C-terminus: uncharacterized protein (144 aa).

Transmembrane regions (helical) follow at residues 16 to 36, 48 to 68, 87 to 107, and 120 to 140; these read FLIF…GAIF, GFIV…ALII, LLPE…LVLL, and VMSL…WYFG.

It localises to the cell membrane. This is an uncharacterized protein from Methanocaldococcus jannaschii (strain ATCC 43067 / DSM 2661 / JAL-1 / JCM 10045 / NBRC 100440) (Methanococcus jannaschii).